A 145-amino-acid chain; its full sequence is Ventricular natriuretic peptide (145 aa).

The N-terminal stretch at 1–24 (MRMGKIAVGYGFLLLLVFQLGVRA) is a signal peptide. A disulfide bridge connects residues cysteine 117 and cysteine 133.

Belongs to the natriuretic peptide family. As to expression, heart atrium and ventricle, and to a very low extent in brain.

Its subcellular location is the secreted. Exhibits natriuretic and vasodepressor activity. The protein is Ventricular natriuretic peptide (vnp) of Acipenser transmontanus (White sturgeon).